Reading from the N-terminus, the 248-residue chain is tRNA (guanine-N(1)-)-methyltransferase (248 aa).

Residues Gly117 and 137-142 (IGDFVL) contribute to the S-adenosyl-L-methionine site.

This sequence belongs to the RNA methyltransferase TrmD family. As to quaternary structure, homodimer.

It localises to the cytoplasm. The enzyme catalyses guanosine(37) in tRNA + S-adenosyl-L-methionine = N(1)-methylguanosine(37) in tRNA + S-adenosyl-L-homocysteine + H(+). Specifically methylates guanosine-37 in various tRNAs. The sequence is that of tRNA (guanine-N(1)-)-methyltransferase from Polynucleobacter necessarius subsp. necessarius (strain STIR1).